The sequence spans 256 residues: Cell division protein DivIB (256 aa).

Residues 1–30 lie on the Cytoplasmic side of the membrane; sequence MNNSKVIKLQDRVPKLKNQKKKNKKNVNHR. Residues 31–51 traverse the membrane as a helical segment; sequence LILYISILFLLVLFLIYFRSP. Over 52–256 the chain is Extracellular; the sequence is LSNIKKISVF…KELGAEEKKE (205 aa). The POTRA domain maps to 53 to 121; sequence SNIKKISVFG…NNIDIHIEEY (69 aa).

This sequence belongs to the FtsQ/DivIB family. DivIB subfamily.

It is found in the cell membrane. Functionally, cell division protein that may be involved in stabilizing or promoting the assembly of the division complex. This Bacillus cereus (strain ATCC 14579 / DSM 31 / CCUG 7414 / JCM 2152 / NBRC 15305 / NCIMB 9373 / NCTC 2599 / NRRL B-3711) protein is Cell division protein DivIB.